Reading from the N-terminus, the 465-residue chain is MVTQATSVRWQLWIVAFGFFMQTLDTTIVNTALPSIAASLGENPLRMQSVIVSYVLTVAVMLPASGWLADRIGVKWVFFSAIILFTFGSLMCAQSATLNELILSRVLQGVGGAMMVPVGRLTVMKIVPREQYMAAMAFVTLPGQIGPLVGPALGGFLVEFASWHWIFLINLPVGVIGALATLLLMPNHKMSTRRFDISGFIMLAIGMATLTLALDGHTGLGLSPLAIAGLILCGVIALGSYWWHALGNRFALFSLHLFKNKIYTLGLVGSMSARIGSGMLPFMTPIFLQIGLGFSPFHAGLMMIPMIIGSMGMKRIIVQVVNRFGYRRVLVNATLLLAVVSLSLPLVAIMGWTLLMPVVLFFQGMLNALRFSTMNTLTLKTLPDRLASSGNSLLSMAMQLSMSIGVSTAGILLGTFAHHQVATNTPATHSAFLYSYLCMAIIIALPALIFNRVPPDTGANRHLAR.

Transmembrane regions (helical) follow at residues 12–32 (LWIVAFGFFMQTLDTTIVNTA), 49–69 (SVIVSYVLTVAVMLPASGWLA), 72–92 (IGVKWVFFSAIILFTFGSLMC), 102–124 (ILSRVLQGVGGAMMVPVGRLTVM), 138–158 (FVTLPGQIGPLVGPALGGFLV), 165–185 (WIFLINLPVGVIGALATLLLM), 195–215 (FDISGFIMLAIGMATLTLALD), 219–239 (GLGLSPLAIAGLILCGVIALG), 267–287 (LVGSMSARIGSGMLPFMTPIF), 290–310 (IGLGFSPFHAGLMMIPMIIGS), 342–362 (LSLPLVAIMGWTLLMPVVLFF), 393–413 (LLSMAMQLSMSIGVSTAGILL), and 430–450 (SAFLYSYLCMAIIIALPALIF).

Belongs to the major facilitator superfamily. TCR/Tet family.

It localises to the cell inner membrane. In Yersinia pseudotuberculosis serotype O:1b (strain IP 31758), this protein is Putative multidrug resistance protein MdtD.